The chain runs to 547 residues: Solute carrier family 22 member 7 (547 aa).

The next 12 membrane-spanning stretches (helical) occupy residues 21 to 41 (VALLALPRVLLPMHFLLPIFL), 145 to 165 (ATSTFFFAGVLVGAVAFGYLS), 173 to 193 (LLLVAYVSALVLGLVSAASVS), 203 to 223 (LTGTALAGFTIIVMPLELEWL), 233 to 253 (VLSSTFWTGGVMLLALVGYLI), 258 to 278 (WLLLAVTLPCAPGILSLWWVP), 345 to 365 (ISLCCMVVWFGVNFSYYGLSL), 374 to 396 (VYQTQLLFGAVELPSKLLVYLSV), 403 to 423 (LTLAGTLLGTSLSLGFRLLVS), 431 to 451 (TALAVLGKGFSEAAFTTAYLF), 465 to 485 (MGLTALVGRLGGSLAPLAALL), and 492 to 512 (LPKLAYGGIALLAACTALLLP). The tract at residues 521 to 547 (ETIQDVERKSAPSSLQEEEMPMKQVQD) is disordered.

It belongs to the major facilitator (TC 2.A.1) superfamily. Organic cation transporter (TC 2.A.1.19) family.

It is found in the basolateral cell membrane. Its subcellular location is the apical cell membrane. The protein resides in the cell membrane. It catalyses the reaction orotate(out) + L-glutamate(in) = orotate(in) + L-glutamate(out). The enzyme catalyses 3',5'-cyclic GMP(in) = 3',5'-cyclic GMP(out). It carries out the reaction GMP(in) = GMP(out). The catalysed reaction is 2'-deoxyguanosine(in) = 2'-deoxyguanosine(out). It catalyses the reaction GDP(in) = GDP(out). The enzyme catalyses guanosine(in) = guanosine(out). It carries out the reaction GTP(in) = GTP(out). The catalysed reaction is 3',5'-cyclic AMP(in) = 3',5'-cyclic AMP(out). It catalyses the reaction creatinine(in) = creatinine(out). The enzyme catalyses prostaglandin E2(out) = prostaglandin E2(in). It carries out the reaction 2-oxoglutarate(in) = 2-oxoglutarate(out). The catalysed reaction is glutarate(in) = glutarate(out). It catalyses the reaction urate(out) = urate(in). The enzyme catalyses estrone 3-sulfate(out) = estrone 3-sulfate(in). Functions as a Na(+)-independent bidirectional multispecific transporter. Contributes to the renal and hepatic elimination of endogenous organic compounds from the systemic circulation into the urine and bile, respectively. Capable of transporting a wide range of purine and pyrimidine nucleobases, nucleosides and nucleotides, with cGMP, 2'deoxyguanosine and GMP being the preferred substrates. Functions as a pH- and chloride-independent cGMP bidirectional facilitative transporter that can regulate both intracellular and extracellular levels of cGMP and may be involved in cGMP signaling pathways. Mediates orotate/glutamate bidirectional exchange and most likely display a physiological role in hepatic release of glutamate into the blood. Involved in renal secretion and possible reabsorption of creatinine. Able to uptake prostaglandin E2 (PGE2) and may contribute to PGE2 renal excretion. Also transports alpha-ketoglutarate and urate. Apart from the orotate/glutamate exchange, the counterions for the uptake of other SLC22A7/OAT2 substrates remain to be identified. The chain is Solute carrier family 22 member 7 (SLC22A7) from Sus scrofa (Pig).